We begin with the raw amino-acid sequence, 256 residues long: tRNA-cytidine(32) 2-sulfurtransferase (256 aa).

The short motif at 35 to 40 (SGGKDS) is the PP-loop motif element. Positions 110, 113, and 201 each coordinate [4Fe-4S] cluster.

It belongs to the TtcA family. Homodimer. Requires Mg(2+) as cofactor. [4Fe-4S] cluster is required as a cofactor.

It localises to the cytoplasm. The catalysed reaction is cytidine(32) in tRNA + S-sulfanyl-L-cysteinyl-[cysteine desulfurase] + AH2 + ATP = 2-thiocytidine(32) in tRNA + L-cysteinyl-[cysteine desulfurase] + A + AMP + diphosphate + H(+). Its pathway is tRNA modification. In terms of biological role, catalyzes the ATP-dependent 2-thiolation of cytidine in position 32 of tRNA, to form 2-thiocytidine (s(2)C32). The sulfur atoms are provided by the cysteine/cysteine desulfurase (IscS) system. This is tRNA-cytidine(32) 2-sulfurtransferase from Coxiella burnetii (strain RSA 493 / Nine Mile phase I).